We begin with the raw amino-acid sequence, 334 residues long: Delta(1)-pyrroline-2-carboxylate/Delta(1)-piperideine-2-carboxylate reductase (334 aa).

Residue Ser44 is the Charge relay system of the active site. Catalysis depends on His45, which acts as the Proton donor. Arg49 lines the substrate pocket. 117–121 (HFSAL) provides a ligand contact to NADP(+). Residue Thr157 coordinates substrate. 175–177 (DFA) is an NADP(+) binding site. 183-184 (RG) contributes to the substrate binding site. Glu185 (charge relay system) is an active-site residue. NADP(+) is bound by residues 226-227 (HK) and 301-307 (RLPSQRR).

This sequence belongs to the LDH2/MDH2 oxidoreductase family. Homodimer.

The enzyme catalyses L-pipecolate + NADP(+) = Delta(1)-piperideine-2-carboxylate + NADPH + H(+). The catalysed reaction is L-proline + NADP(+) = 1-pyrroline-2-carboxylate + NADPH + H(+). It catalyses the reaction cis-4-hydroxy-L-proline + NADP(+) = Delta(1)-pyrroline-(4S)-hydroxy-2-carboxylate + NADPH + 2 H(+). Its function is as follows. Catalyzes the reduction of both Delta(1)-pyrroline-2-carboxylate (Pyr2C) and Delta(1)-piperideine-2-carboxylate (Pip2C) to L-proline and L-pipecolate, respectively, using NADPH as the electron donor. Cannot use NADH instead of NADPH. Is likely involved in a degradation pathway that converts trans-3-hydroxy-L-proline (t3LHyp) to L-proline, which would allow P.aeruginosa to grow on t3LHyp as a sole carbon source. Can also catalyze the reverse oxidation reactions, albeit at a much lower rate. Is also able to use Delta(1)-pyrroline-(4S)-hydroxy-2-carboxylate (Pyr4SH2C) and cis-4-hydroxy-L-proline (c4LHyp) as substrates, and might be involved in the metabolism of c4LHyp, a compound which is generated by the hydroxylation of free L-proline in bacteria. The chain is Delta(1)-pyrroline-2-carboxylate/Delta(1)-piperideine-2-carboxylate reductase from Pseudomonas aeruginosa (strain ATCC 15692 / DSM 22644 / CIP 104116 / JCM 14847 / LMG 12228 / 1C / PRS 101 / PAO1).